The following is a 1567-amino-acid chain: ABC multidrug transporter MDR1 (1567 aa).

The span at 1–11 shows a compositional bias: pro residues; that stretch reads MASQPPQPPSG. Positions 1–37 are disordered; sequence MASQPPQPPSGQPDTQYEEYQSEVITETTNRPTPAAD. The segment covering 22 to 32 has biased composition (polar residues); it reads SEVITETTNRP. Asn149, Asn157, and Asn356 each carry an N-linked (GlcNAc...) asparagine glycan. The ABC transporter 1 domain maps to 167–432; it reads VQYQDTFLSP…FEEMGWYCPP (266 aa). A run of 6 helical transmembrane segments spans residues 543-563, 571-591, 636-656, 661-681, 691-711, and 798-818; these read STIATNISQIMMALIIGSLFF, GFFAKGSVIFFAILLNGLMSI, IPIKFLLALVFNIIIYFLGGL, AKFFIFFLFTFITILTMSAIF, IPQALALAGVMILALVIYTGF, and LGILLGFLAFFYFVYLMVSEL. Residues Asn819, Asn895, and Asn912 are each glycosylated (N-linked (GlcNAc...) asparagine). Positions 891–1134 constitute an ABC transporter 2 domain; the sequence is FTWRNVTYDI…LLNYFETHGA (244 aa). An ATP-binding site is contributed by 927-934; the sequence is GVSGAGKT. Positions 1172–1202 are disordered; sequence ESRHVQQELDRIQSETSKRNEGHGQSAEKEP. The chain crosses the membrane as a helical span at residues 1231 to 1251; sequence IWGKLLLGLASALFIGFSFFL. N-linked (GlcNAc...) asparagine glycosylation is present at Asn1253. The next 5 helical transmembrane spans lie at 1257–1277, 1305–1325, 1345–1365, 1372–1392, and 1498–1518; these read AGLQNSLFSIFMLTTIFSSLV, VFLLANIIVEIPYQILLGIIA, ILLLYCVQFFIFASTFAQMII, ETAGGIATTMFGLMVTFNGVL, and GIGWAYIVFNIFATVALYYLI.

It belongs to the ABC transporter superfamily. ABCG family. PDR (TC 3.A.1.205) subfamily.

The protein localises to the cell membrane. It catalyses the reaction voriconazole(in) + ATP + H2O = voriconazole(out) + ADP + phosphate + H(+). The enzyme catalyses fluconazole(in) + ATP + H2O = fluconazole(out) + ADP + phosphate + H(+). The catalysed reaction is (R)-miconazole(in) + ATP + H2O = (R)-miconazole(out) + ADP + phosphate + H(+). It carries out the reaction (S)-miconazole(in) + ATP + H2O = (S)-miconazole(out) + ADP + phosphate + H(+). Its function is as follows. Pleiotropic ABC efflux transporter that may be involved in the modulation susceptibility to a wide range of unrelated cytotoxic compounds, including ethidium bromide, ketoconazole, cycloheximide, fluconazole, griseofulvin, imazalil and itraconazole. This is ABC multidrug transporter MDR1 from Trichophyton interdigitale (strain MR816).